Here is a 136-residue protein sequence, read N- to C-terminus: DNA-directed RNA polymerase subunit omega (136 aa).

Residues 79–107 (EPEAETVPLLSSSPAAAAVAPQSSSDDAA) are disordered. A compositionally biased stretch (low complexity) spans 89–107 (SSSPAAAAVAPQSSSDDAA).

Belongs to the RNA polymerase subunit omega family. In terms of assembly, the RNAP catalytic core consists of 2 alpha, 1 beta, 1 beta' and 1 omega subunit. When a sigma factor is associated with the core the holoenzyme is formed, which can initiate transcription.

It carries out the reaction RNA(n) + a ribonucleoside 5'-triphosphate = RNA(n+1) + diphosphate. Functionally, promotes RNA polymerase assembly. Latches the N- and C-terminal regions of the beta' subunit thereby facilitating its interaction with the beta and alpha subunits. This chain is DNA-directed RNA polymerase subunit omega, found in Methylobacterium radiotolerans (strain ATCC 27329 / DSM 1819 / JCM 2831 / NBRC 15690 / NCIMB 10815 / 0-1).